The following is a 188-amino-acid chain: dCTP deaminase (188 aa).

Residues 111-116, 135-137, Q156, Y170, and Q180 contribute to the dCTP site; these read KSTYAR and TLE. E137 functions as the Proton donor/acceptor in the catalytic mechanism.

This sequence belongs to the dCTP deaminase family. In terms of assembly, homotrimer.

It catalyses the reaction dCTP + H2O + H(+) = dUTP + NH4(+). It participates in pyrimidine metabolism; dUMP biosynthesis; dUMP from dCTP (dUTP route): step 1/2. Its function is as follows. Catalyzes the deamination of dCTP to dUTP. The chain is dCTP deaminase from Cupriavidus necator (strain ATCC 17699 / DSM 428 / KCTC 22496 / NCIMB 10442 / H16 / Stanier 337) (Ralstonia eutropha).